We begin with the raw amino-acid sequence, 166 residues long: MAIKLEDKKAIVAEVNEAAKAALSAVVADARGVTVGAMTGLRKEAREAGVYVKVVRNTLLKRAVEGTQFDVLNDVFKGPTLIAFSNEHPGAAARIFREFAKGQDKFEIKAAAFEGQFLAANQIDVLASLPTYDEAVSQLMSVIQGATSKLARTLAAIRDQKEAAAA.

Belongs to the universal ribosomal protein uL10 family. In terms of assembly, part of the ribosomal stalk of the 50S ribosomal subunit. The N-terminus interacts with L11 and the large rRNA to form the base of the stalk. The C-terminus forms an elongated spine to which L12 dimers bind in a sequential fashion forming a multimeric L10(L12)X complex.

Functionally, forms part of the ribosomal stalk, playing a central role in the interaction of the ribosome with GTP-bound translation factors. The sequence is that of Large ribosomal subunit protein uL10 from Pseudomonas paraeruginosa (strain DSM 24068 / PA7) (Pseudomonas aeruginosa (strain PA7)).